The sequence spans 360 residues: Aspartate beta-hydroxylase domain-containing protein 1 (360 aa).

The Cytoplasmic portion of the chain corresponds to methionine 1–proline 45. A helical transmembrane segment spans residues leucine 46 to cysteine 68. Residues tyrosine 69–proline 360 lie on the Lumenal side of the membrane.

It belongs to the aspartyl/asparaginyl beta-hydroxylase family.

The protein localises to the membrane. The polypeptide is Aspartate beta-hydroxylase domain-containing protein 1 (Asphd1) (Mus musculus (Mouse)).